We begin with the raw amino-acid sequence, 688 residues long: G-protein coupled receptor-associated protein LMBRD2 (688 aa).

Topologically, residues 1–3 are extracellular; the sequence is MSG. Residues 4–21 traverse the membrane as a helical segment; the sequence is AALGLEIVFVFFLALFLL. The Cytoplasmic portion of the chain corresponds to 22 to 32; that stretch reads HRYGDFKKQHR. The chain crosses the membrane as a helical span at residues 33-53; it reads LVIIATLLAWYLCFLIVFILP. The Extracellular segment spans residues 54-99; sequence LDVSTTIYNRCKLAVNSSPAESNSSFVTLAPSKQQCFKPWSYIPNG. The N-linked (GlcNAc...) asparagine glycan is linked to Asn-76. Residues 100-120 form a helical membrane-spanning segment; that stretch reads IMPIFWRVVYWTSQFLTWILL. Topologically, residues 121-144 are cytoplasmic; the sequence is PFMQSYARSGGFSITGKIKTALIE. A helical membrane pass occupies residues 145-165; sequence NAIYYGTYLLIFGAFLIYVAV. Topologically, residues 166–180 are extracellular; that stretch reads NPKFNLQWNQLQTIG. The helical transmembrane segment at 181–201 threads the bilayer; that stretch reads IAAANTWGLFLLVLLLGYGLV. The Cytoplasmic segment spans residues 202-381; that stretch reads EIPRSHWNGA…ECLLRPWFYR (180 aa). Residues 222 to 254 are a coiled coil; sequence FKAAKLMTEKADAEENLEDIMEEVRKVSESIKY. Residues 382 to 402 traverse the membrane as a helical segment; sequence VLAVVLAAFSVIVVWSECTFF. The Extracellular portion of the chain corresponds to 403–426; the sequence is STRPVLSLVAVFIQLAEKTYNYIY. A helical membrane pass occupies residues 427–447; sequence IEMACFLTIFFLSICVYSTVF. The Cytoplasmic portion of the chain corresponds to 448–467; sequence RIRVFNYYYLASHHQTDAYS. A helical membrane pass occupies residues 468–488; that stretch reads LLFSGMLFCRLTPPLCLNFLG. The Extracellular portion of the chain corresponds to 489–515; that stretch reads LTHMDATISHTDAQPTAYTSIMGSMKV. Residues 516–536 form a helical membrane-spanning segment; that stretch reads LSFIADGFYIYYPMLVVILCI. At 537–688 the chain is on the cytoplasmic side; that stretch reads ATYFSLGTRC…MSRSRIFEDV (152 aa). Residues 600–617 show a composition bias toward basic and acidic residues; the sequence is REDSTRNRVVHTEQKESS. Residues 600 to 673 form a disordered region; the sequence is REDSTRNRVV…ESDSGRYQPG (74 aa). Polar residues predominate over residues 618–634; the sequence is FSETNTNRPLSKYTRTN. The span at 635-644 shows a compositional bias: basic and acidic residues; it reads GRTERDRIEL.

It belongs to the LIMR family.

The protein resides in the cell membrane. Functionally, may associate with G-protein coupled receptors and regulate downstream signaling pathways. The chain is G-protein coupled receptor-associated protein LMBRD2 from Gallus gallus (Chicken).